The chain runs to 319 residues: Acetyl-coenzyme A carboxylase carboxyl transferase subunit alpha (319 aa).

A CoA carboxyltransferase C-terminal domain is found at 34-295 (ELEEEVSKLK…KVRLKRDLAD (262 aa)).

It belongs to the AccA family. As to quaternary structure, acetyl-CoA carboxylase is a heterohexamer composed of biotin carboxyl carrier protein (AccB), biotin carboxylase (AccC) and two subunits each of ACCase subunit alpha (AccA) and ACCase subunit beta (AccD).

It localises to the cytoplasm. The catalysed reaction is N(6)-carboxybiotinyl-L-lysyl-[protein] + acetyl-CoA = N(6)-biotinyl-L-lysyl-[protein] + malonyl-CoA. It functions in the pathway lipid metabolism; malonyl-CoA biosynthesis; malonyl-CoA from acetyl-CoA: step 1/1. Functionally, component of the acetyl coenzyme A carboxylase (ACC) complex. First, biotin carboxylase catalyzes the carboxylation of biotin on its carrier protein (BCCP) and then the CO(2) group is transferred by the carboxyltransferase to acetyl-CoA to form malonyl-CoA. The polypeptide is Acetyl-coenzyme A carboxylase carboxyl transferase subunit alpha (Pseudoalteromonas translucida (strain TAC 125)).